The chain runs to 276 residues: Probable transposase for insertion sequence element IS702 (276 aa).

A DDE Tnp4 domain is found at methionine 118–arginine 256. A divalent metal cation is bound by residues aspartate 119, aspartate 170, aspartate 190, and glutamate 234.

The protein belongs to the transposase 11 family. A divalent metal cation is required as a cofactor.

Involved in the transposition of the insertion sequence. This chain is Probable transposase for insertion sequence element IS702, found in Microchaete diplosiphon (Fremyella diplosiphon).